The following is a 464-amino-acid chain: MGKRLLDKLWERHVVATNENGLDLLYIDLHLVHEVTSPQAFEGLRLTNRTVRRPDLTFATMDHNIPTKDVWNITDRIAKQQLDTLRENCKQFQVPLADIGDEEQGIVHVIGPELGLTQPGKTIVCGDSHTATHGAFGALAFGIGTSEVEHVLATQTLWQRKPKAMGIELKGKLQKGVYAKDIILHLLSKYGVAVGTGYVMEFYGETIQAMEMEERMTLCNMAIEGGAKAGIIAPDEKTVAYVKGRKYAPKDYETFEKKWSELYTDADAMYDLHISIDVTDLAPYVTWGTNPSMGVRIDEKLPEKHDVNDERAFSYMGLSPGQSTYDIPVQHVFIGSCTNSRLSDLEIAASVVKGRKVKEGVRALVVPGSKRVRDAAMQKGLHHIFEEAGFEWREPGCSMCLGMNPDQVPEGEHCASTSNRNFEGRQGKGARTHLVSPAMAAAAALYGHFVDIRKESYDGAISYS.

3 residues coordinate [4Fe-4S] cluster: cysteine 337, cysteine 397, and cysteine 400.

This sequence belongs to the aconitase/IPM isomerase family. LeuC type 1 subfamily. As to quaternary structure, heterodimer of LeuC and LeuD. Requires [4Fe-4S] cluster as cofactor.

The catalysed reaction is (2R,3S)-3-isopropylmalate = (2S)-2-isopropylmalate. The protein operates within amino-acid biosynthesis; L-leucine biosynthesis; L-leucine from 3-methyl-2-oxobutanoate: step 2/4. Its function is as follows. Catalyzes the isomerization between 2-isopropylmalate and 3-isopropylmalate, via the formation of 2-isopropylmaleate. This Bacillus cereus (strain ATCC 10987 / NRS 248) protein is 3-isopropylmalate dehydratase large subunit.